Consider the following 289-residue polypeptide: Protoheme IX farnesyltransferase 2 (289 aa).

9 consecutive transmembrane segments (helical) span residues 4-24, 28-48, 66-86, 99-118, 124-144, 155-175, 199-219, 221-241, and 256-276; these read PGII…AAKG, LVLM…GCAI, RVTV…LALG, ALAL…VYSL, SVYG…VGYC, AILL…IAIF, LHIV…PLAG, TGIA…AMAL, and QVFG…ALDF.

This sequence belongs to the UbiA prenyltransferase family. Protoheme IX farnesyltransferase subfamily.

The protein localises to the cell inner membrane. It catalyses the reaction heme b + (2E,6E)-farnesyl diphosphate + H2O = Fe(II)-heme o + diphosphate. Its pathway is porphyrin-containing compound metabolism; heme O biosynthesis; heme O from protoheme: step 1/1. In terms of biological role, converts heme B (protoheme IX) to heme O by substitution of the vinyl group on carbon 2 of heme B porphyrin ring with a hydroxyethyl farnesyl side group. The polypeptide is Protoheme IX farnesyltransferase 2 (Shewanella baltica (strain OS195)).